The sequence spans 149 residues: Large ribosomal subunit protein bL9 (149 aa).

The protein belongs to the bacterial ribosomal protein bL9 family.

Binds to the 23S rRNA. The chain is Large ribosomal subunit protein bL9 from Haemophilus ducreyi (strain 35000HP / ATCC 700724).